The primary structure comprises 922 residues: Autophagy-related protein 9B (922 aa).

Disordered stretches follow at residues 1-22 (MVRR…DLGP) and 85-144 (TPHN…MGPL). The Cytoplasmic segment spans residues 1–206 (MVRRTGWGGS…KIYSYHQRNG (206 aa)). Over residues 85 to 114 (TPHNVLPTPTTPSTQAHPTMIHTSASPSWG) the composition is skewed to polar residues. Positions 115–124 (SHSTPPLASA) are enriched in low complexity. A Tyrosine-based sorting signal motif is present at residues 150–153 (YERL). A helical membrane pass occupies residues 207–227 (FACILLEDVFQLGQFIFIVTF). At 228–275 (TTFLLRCVDYNVLFNNQPKNHTRRGPLHSKVTLSDAILPSAQCAEKIH) the chain is on the lumenal side. The helical transmembrane segment at 276 to 296 (DSPLLVFLLVLAAGFWLFQLL) threads the bilayer. At 297-437 (RSVCNLFSYW…GVLANRWRRT (141 aa)) the chain is on the cytoplasmic side. The stretch at 438-458 (VLLLAAVNLALSPLVLAWQVL) is an intramembrane region. At 459 to 523 (HAFYSHVELL…RAAEPPAPLR (65 aa)) the chain is on the cytoplasmic side. The helical transmembrane segment at 524–544 (ALLARQLVFFSGALFAALLVL) threads the bilayer. Residues 545–550 (TIYDED) lie on the Lumenal side of the membrane. Residues 551-571 (VLAVEHVLTTMTALGVTATVA) traverse the membrane as a helical segment. Topologically, residues 572 to 624 (RSFIPEEQCQGRSSQLLLQAALAHMHYLPEEPGATGARASSYWQMAQLLQYRA) are cytoplasmic. Residues 625 to 645 (VSLLEELLSPLLTPLFLLFWF) lie within the membrane without spanning it. The Cytoplasmic segment spans residues 646-922 (RPRALEIIDF…QKEPLTGPLH (277 aa)). Residues 848-922 (ELWGEASASS…QKEPLTGPLH (75 aa)) are disordered. Composition is skewed to low complexity over residues 854 to 870 (SASS…QPGS) and 877 to 889 (SWSS…ASSP). Over residues 890-899 (RQQWGTQRAQ) the composition is skewed to polar residues.

It belongs to the ATG9 family. As to quaternary structure, homotrimer; forms a homotrimer with a central pore that forms a path between the two membrane leaflets. As to expression, expressed in heart, brain, and placenta and testis.

The protein localises to the preautophagosomal structure membrane. The enzyme catalyses a 1,2-diacyl-sn-glycero-3-phosphocholine(in) = a 1,2-diacyl-sn-glycero-3-phosphocholine(out). It carries out the reaction a 1,2-diacyl-sn-glycero-3-phospho-L-serine(in) = a 1,2-diacyl-sn-glycero-3-phospho-L-serine(out). It catalyses the reaction a 1,2-diacyl-sn-glycero-3-phosphoethanolamine(in) = a 1,2-diacyl-sn-glycero-3-phosphoethanolamine(out). Phospholipid scramblase involved in autophagy by mediating autophagosomal membrane expansion. Cycles between the preautophagosomal structure/phagophore assembly site (PAS) and the cytoplasmic vesicle pool and supplies membrane for the growing autophagosome. Lipid scramblase activity plays a key role in preautophagosomal structure/phagophore assembly by distributing the phospholipids that arrive through ATG2 (ATG2A or ATG2B) from the cytoplasmic to the luminal leaflet of the bilayer, thereby driving autophagosomal membrane expansion. In addition to autophagy, also plays a role in necrotic cell death. The polypeptide is Autophagy-related protein 9B (Mus musculus (Mouse)).